The chain runs to 534 residues: Phosphoenolpyruvate carboxykinase (ATP) (534 aa).

Substrate-binding residues include Arg-58, Tyr-194, and Lys-200. ATP-binding positions include Lys-200, His-219, and 235 to 243 (GLSGTGKTT). Lys-200 and His-219 together coordinate Mn(2+). Asp-256 lines the Mn(2+) pocket. Residues Glu-284, Arg-322, and Thr-449 each coordinate ATP. Position 322 (Arg-322) interacts with substrate.

The protein belongs to the phosphoenolpyruvate carboxykinase (ATP) family. Mn(2+) is required as a cofactor.

The protein resides in the cytoplasm. The catalysed reaction is oxaloacetate + ATP = phosphoenolpyruvate + ADP + CO2. It functions in the pathway carbohydrate biosynthesis; gluconeogenesis. In terms of biological role, involved in the gluconeogenesis. Catalyzes the conversion of oxaloacetate (OAA) to phosphoenolpyruvate (PEP) through direct phosphoryl transfer between the nucleoside triphosphate and OAA. This chain is Phosphoenolpyruvate carboxykinase (ATP), found in Novosphingobium aromaticivorans (strain ATCC 700278 / DSM 12444 / CCUG 56034 / CIP 105152 / NBRC 16084 / F199).